A 559-amino-acid polypeptide reads, in one-letter code: Dihydroxy-acid dehydratase (559 aa).

Cysteine 49 contributes to the [2Fe-2S] cluster binding site. Residue aspartate 81 participates in Mg(2+) binding. A [2Fe-2S] cluster-binding site is contributed by cysteine 122. Aspartate 123 and lysine 124 together coordinate Mg(2+). Position 124 is an N6-carboxylysine (lysine 124). Cysteine 194 is a binding site for [2Fe-2S] cluster. Residue glutamate 446 participates in Mg(2+) binding. Serine 472 acts as the Proton acceptor in catalysis.

This sequence belongs to the IlvD/Edd family. In terms of assembly, homodimer. [2Fe-2S] cluster is required as a cofactor. Requires Mg(2+) as cofactor.

It carries out the reaction (2R)-2,3-dihydroxy-3-methylbutanoate = 3-methyl-2-oxobutanoate + H2O. The catalysed reaction is (2R,3R)-2,3-dihydroxy-3-methylpentanoate = (S)-3-methyl-2-oxopentanoate + H2O. Its pathway is amino-acid biosynthesis; L-isoleucine biosynthesis; L-isoleucine from 2-oxobutanoate: step 3/4. It functions in the pathway amino-acid biosynthesis; L-valine biosynthesis; L-valine from pyruvate: step 3/4. Its function is as follows. Functions in the biosynthesis of branched-chain amino acids. Catalyzes the dehydration of (2R,3R)-2,3-dihydroxy-3-methylpentanoate (2,3-dihydroxy-3-methylvalerate) into 2-oxo-3-methylpentanoate (2-oxo-3-methylvalerate) and of (2R)-2,3-dihydroxy-3-methylbutanoate (2,3-dihydroxyisovalerate) into 2-oxo-3-methylbutanoate (2-oxoisovalerate), the penultimate precursor to L-isoleucine and L-valine, respectively. The sequence is that of Dihydroxy-acid dehydratase from Prochlorococcus marinus subsp. pastoris (strain CCMP1986 / NIES-2087 / MED4).